Reading from the N-terminus, the 203-residue chain is Cardiotrophin-1 (203 aa).

Belongs to the IL-6 superfamily. In terms of tissue distribution, highly expressed in heart, skeletal muscle, liver, lung and kidney. Lower levels in testis and brain. No expression in spleen.

The protein localises to the secreted. Induces cardiac myocyte hypertrophy in vitro. Binds to and activates the ILST/gp130 receptor. In Mus musculus (Mouse), this protein is Cardiotrophin-1 (Ctf1).